Reading from the N-terminus, the 470-residue chain is Glutamyl-tRNA(Gln) amidotransferase subunit A (470 aa).

Residues lysine 71 and serine 146 each act as charge relay system in the active site. Serine 170 (acyl-ester intermediate) is an active-site residue.

The protein belongs to the amidase family. GatA subfamily. As to quaternary structure, heterotrimer of A, B and C subunits.

The catalysed reaction is L-glutamyl-tRNA(Gln) + L-glutamine + ATP + H2O = L-glutaminyl-tRNA(Gln) + L-glutamate + ADP + phosphate + H(+). Functionally, allows the formation of correctly charged Gln-tRNA(Gln) through the transamidation of misacylated Glu-tRNA(Gln) in organisms which lack glutaminyl-tRNA synthetase. The reaction takes place in the presence of glutamine and ATP through an activated gamma-phospho-Glu-tRNA(Gln). In Akkermansia muciniphila (strain ATCC BAA-835 / DSM 22959 / JCM 33894 / BCRC 81048 / CCUG 64013 / CIP 107961 / Muc), this protein is Glutamyl-tRNA(Gln) amidotransferase subunit A.